Consider the following 287-residue polypeptide: ATP synthase gamma chain (287 aa).

It belongs to the ATPase gamma chain family. As to quaternary structure, F-type ATPases have 2 components, CF(1) - the catalytic core - and CF(0) - the membrane proton channel. CF(1) has five subunits: alpha(3), beta(3), gamma(1), delta(1), epsilon(1). CF(0) has three main subunits: a, b and c.

The protein localises to the cell inner membrane. Produces ATP from ADP in the presence of a proton gradient across the membrane. The gamma chain is believed to be important in regulating ATPase activity and the flow of protons through the CF(0) complex. This is ATP synthase gamma chain from Shigella boydii serotype 4 (strain Sb227).